A 429-amino-acid polypeptide reads, in one-letter code: Ribosomal RNA small subunit methyltransferase B (429 aa).

S-adenosyl-L-methionine contacts are provided by residues 254-260 (CAAPGGK), Asp277, Asp303, and Asp322. The Nucleophile role is filled by Cys375.

It belongs to the class I-like SAM-binding methyltransferase superfamily. RsmB/NOP family.

The protein localises to the cytoplasm. It carries out the reaction cytidine(967) in 16S rRNA + S-adenosyl-L-methionine = 5-methylcytidine(967) in 16S rRNA + S-adenosyl-L-homocysteine + H(+). Its function is as follows. Specifically methylates the cytosine at position 967 (m5C967) of 16S rRNA. The sequence is that of Ribosomal RNA small subunit methyltransferase B from Shigella boydii serotype 4 (strain Sb227).